A 321-amino-acid chain; its full sequence is Chitinase-like protein 1 (321 aa).

The N-terminal stretch at 1 to 26 is a signal peptide; the sequence is MVTIRSGSIVILVLLAVSFLALVANG. A disulfide bridge links cysteine 42 with cysteine 55. N-linked (GlcNAc...) asparagine glycosylation occurs at asparagine 57. The cysteines at positions 157 and 167 are disulfide-linked. Asparagine 208 and asparagine 244 each carry an N-linked (GlcNAc...) asparagine glycan. Cysteines 267 and 304 form a disulfide. A disordered region spans residues 297–321; it reads GPNDELSCAEQKPFNPSTVPSSSSS. Residues 310-321 are compositionally biased toward polar residues; the sequence is FNPSTVPSSSSS.

Belongs to the glycosyl hydrolase 19 family. Mostly expressed in seedlings shoots and roots, stems, and flowers, and, to a lower extent, in flowers, mature leaves and roots.

Its subcellular location is the secreted. In terms of biological role, no chitinase activity. Essential for normal plant growth and development. Regulates cell expansion extent and differentiation at least in roots and hypocotyls. Prevents lignin accumulation in the pith. May modulate ethylene-mediated regulation during development. Probably required to establish thermotolerance acclimation. Plays a role for controlled anisotropic cell expansion in the regulation of waving during root gravitropism and thigmotropism. Involved in the root system architecture adaptation to multiple environmental conditions such as nitrate. Contributes to salt tolerance and possibly to drought by preventing the overaccumulation of sodium ions. The chain is Chitinase-like protein 1 (CTL1) from Arabidopsis thaliana (Mouse-ear cress).